A 356-amino-acid polypeptide reads, in one-letter code: MEMGFRWYGSQNDQIHLADIRQIPGVRQVVGALFDIPVGEVWPEDQIIRLKHQIEAAGLKFTVVESVNIHDDIKIGLPSRDRYIENYQQTIRNLAAAGVRTICYNFMPIFDWVRTNLHFSLADGSQALAFEHRQVQRQPQDIIHEIENNANGFVLPGWEPERLAQVQQLFDAYAGVDETQLAANLNYFLDAIIPVCEECHVQMALHPDDPPRELFGLPRIYKNLADMNRIVAMNPSTANGFTICTGSLGENPQNDVPAIIREFVPQGRVPFVHARNIKFMSDQGDFHESAHLSSMGSLDMFAIMQALHETGFSGVIRPDHGRDIWHESGRPGYGLYDRALGITYLNGLWEALEKQA.

This sequence belongs to the mannonate dehydratase family. Fe(2+) serves as cofactor. Requires Mn(2+) as cofactor.

The catalysed reaction is D-mannonate = 2-dehydro-3-deoxy-D-gluconate + H2O. It functions in the pathway carbohydrate metabolism; pentose and glucuronate interconversion. Catalyzes the dehydration of D-mannonate. The polypeptide is Mannonate dehydratase (Levilactobacillus brevis (strain ATCC 367 / BCRC 12310 / CIP 105137 / JCM 1170 / LMG 11437 / NCIMB 947 / NCTC 947) (Lactobacillus brevis)).